A 406-amino-acid chain; its full sequence is Imidazolonepropionase (406 aa).

Fe(3+)-binding residues include histidine 72 and histidine 74. Zn(2+) contacts are provided by histidine 72 and histidine 74. 4-imidazolone-5-propanoate is bound by residues arginine 81, tyrosine 144, and histidine 177. Residue tyrosine 144 coordinates N-formimidoyl-L-glutamate. Histidine 242 is a Fe(3+) binding site. Zn(2+) is bound at residue histidine 242. Glutamine 245 is a binding site for 4-imidazolone-5-propanoate. Aspartate 317 provides a ligand contact to Fe(3+). Residue aspartate 317 participates in Zn(2+) binding. Residues asparagine 319 and glycine 321 each contribute to the N-formimidoyl-L-glutamate site. Residue threonine 322 participates in 4-imidazolone-5-propanoate binding.

It belongs to the metallo-dependent hydrolases superfamily. HutI family. It depends on Zn(2+) as a cofactor. Fe(3+) is required as a cofactor.

The protein resides in the cytoplasm. The catalysed reaction is 4-imidazolone-5-propanoate + H2O = N-formimidoyl-L-glutamate. It functions in the pathway amino-acid degradation; L-histidine degradation into L-glutamate; N-formimidoyl-L-glutamate from L-histidine: step 3/3. In terms of biological role, catalyzes the hydrolytic cleavage of the carbon-nitrogen bond in imidazolone-5-propanoate to yield N-formimidoyl-L-glutamate. It is the third step in the universal histidine degradation pathway. This is Imidazolonepropionase from Yersinia pestis bv. Antiqua (strain Antiqua).